Reading from the N-terminus, the 81-residue chain is Costars family protein ABRACL (81 aa).

The protein belongs to the costars family.

The polypeptide is Costars family protein ABRACL (Salmo salar (Atlantic salmon)).